The sequence spans 370 residues: Putative F-box protein At1g47390 (370 aa).

Residues 1–47 enclose the F-box domain; that stretch reads MAPEEKLPCELIEEILSRVPPESLVRFRTVSKKWNALFDDKMFINNH.

This is Putative F-box protein At1g47390 from Arabidopsis thaliana (Mouse-ear cress).